The following is a 189-amino-acid chain: Large ribosomal subunit protein eL14 (189 aa).

Belongs to the eukaryotic ribosomal protein eL14 family.

Its function is as follows. Component of the large ribosomal subunit. The ribosome is a large ribonucleoprotein complex responsible for the synthesis of proteins in the cell. This is Large ribosomal subunit protein eL14 from Trypanosoma brucei brucei.